A 239-amino-acid polypeptide reads, in one-letter code: Transcriptional regulatory protein DcuR (239 aa).

Residues 3-121 (NVLIIDDDAM…RFEEALTGWR (119 aa)) form the Response regulatory domain. Aspartate 56 bears the 4-aspartylphosphate mark. The H-T-H motif DNA-binding region spans 181 to 200 (TDELANEVNISRVSCRKYLI).

Post-translationally, phosphorylated and activated by DcuS.

The protein resides in the cytoplasm. In terms of biological role, member of the two-component regulatory system DcuR/DcuS. Involved in the C4-dicarboxylate-stimulated regulation of the genes encoding the anaerobic fumarate respiratory system (frdABCD; nuoAN; dcuB; dcuC; sdhCDAB; etc.). Weakly regulates the aerobic C4-dicarboxylate transporter dctA. This is Transcriptional regulatory protein DcuR (dcuR) from Escherichia coli O157:H7.